Here is a 183-residue protein sequence, read N- to C-terminus: Putative calmodulin-like protein 2 (183 aa).

EF-hand domains are found at residues 7–42 (EQIA…LGQS), 43–78 (PTEA…KLRD), 80–115 (GAED…LGDP), and 116–151 (LSDD…KRRQ). Positions 20, 22, 24, 26, 31, 56, 58, 60, 62, 67, 93, 95, 97, 104, 129, 131, 133, 135, and 140 each coordinate Ca(2+). The interval 154–183 (MEGHGSGGHRSSNSHKKSGCCGPNSSCTIL) is disordered. S-palmitoyl cysteine attachment occurs at residues C173 and C174. C180 is subject to Cysteine methyl ester. C180 is lipidated: S-farnesyl cysteine. The propeptide at 181–183 (TIL) is removed in mature form.

This sequence belongs to the calmodulin family.

It localises to the membrane. Its function is as follows. Potential calcium sensor. The polypeptide is Putative calmodulin-like protein 2 (CML2) (Oryza sativa subsp. japonica (Rice)).